Reading from the N-terminus, the 229-residue chain is PKHD-type hydroxylase BBta_3541 (229 aa).

Residues 78-180 (QIFPPLFNRY…RVASFFWMQS (103 aa)) enclose the Fe2OG dioxygenase domain. The Fe cation site is built by H98, D100, and H161. R171 contributes to the 2-oxoglutarate binding site.

Fe(2+) is required as a cofactor. The cofactor is L-ascorbate.

In Bradyrhizobium sp. (strain BTAi1 / ATCC BAA-1182), this protein is PKHD-type hydroxylase BBta_3541.